A 154-amino-acid polypeptide reads, in one-letter code: Ribosomal RNA large subunit methyltransferase H (154 aa).

G103 contributes to the S-adenosyl-L-methionine binding site.

Belongs to the RNA methyltransferase RlmH family. In terms of assembly, homodimer.

It is found in the cytoplasm. The catalysed reaction is pseudouridine(1915) in 23S rRNA + S-adenosyl-L-methionine = N(3)-methylpseudouridine(1915) in 23S rRNA + S-adenosyl-L-homocysteine + H(+). In terms of biological role, specifically methylates the pseudouridine at position 1915 (m3Psi1915) in 23S rRNA. In Gemmatimonas aurantiaca (strain DSM 14586 / JCM 11422 / NBRC 100505 / T-27), this protein is Ribosomal RNA large subunit methyltransferase H.